The following is an 820-amino-acid chain: Leucine-rich repeat and guanylate kinase domain-containing protein (820 aa).

Residues 72-83 (EAEAEQEEKQQE) show a composition bias toward basic and acidic residues. The tract at residues 72–96 (EAEAEQEEKQQEDGESEESEESEMQ) is disordered. A compositionally biased stretch (acidic residues) spans 84–94 (DGESEESEESE). LRR repeat units follow at residues 129 to 149 (YLNLNLSHCELVDISILCGYV), 150 to 171 (HLQKLNLSGNRIEDLSCVSCMP), 172 to 193 (YLLELNASQNKLTTFFNFKPPQ), 194 to 215 (NLKKVDFSSNLISEMYDLSAYH), 216 to 237 (TLTQLILDNNEIEEITGLENCI), 238 to 259 (SLTHLSLAGNKITTIKGLGTLP), 260 to 280 (IKVLSLSNNMIETITGLEELK), 281 to 302 (ALQNLDLSHNQISSLQGLENHD), and 303 to 324 (LLEVINLEDNKIKELSEIEYIE). Positions 337–375 (NPIQTKPEYWFFVIYMLLRLTELDQQKIKVEEKVFAVNK) constitute an LRRCT domain. The Guanylate kinase-like domain occupies 414–597 (YPMLILTGPA…AYQKLSELIR (184 aa)). ATP is bound at residue 421 to 428 (GPAACGKR). The tract at residues 800–820 (TIMDPGSNTKPTLPPIPHGRR) is disordered. Positions 811–820 (TLPPIPHGRR) are enriched in pro residues.

Interacts (via guanylate kinase-like domain) with RIMBP3 (via coiled-coil region). Interacts (via guanylate kinase-like domain) with HOOK2. Interacts (via LRRCT domain) with KLC3. Interacts with HOOK1 and HOOK3. As to expression, highly expressed in the testis. During spermatid development is initially localized to a supra-nuclear region of round spermatids, and is particularly evident at the leading edge of the developing acrosome and acroplaxome. As maturation proceeded and nuclear elongation initiated, LRGUK moves distally to ultimately reside on the microtubules of the manchette. LRGUK is also evident in the sperm basal body and the sperm tail.

It is found in the cytoplasmic vesicle. Its subcellular location is the secretory vesicle. It localises to the acrosome. The protein resides in the cytoplasm. The protein localises to the cytoskeleton. It is found in the cilium basal body. Its function is as follows. Involved in multiple aspects of sperm assembly including acrosome attachment, shaping of the sperm head and in the early aspects of axoneme development. Not essential for primary cilium biogenesis. The polypeptide is Leucine-rich repeat and guanylate kinase domain-containing protein (Lrguk) (Mus musculus (Mouse)).